Here is a 452-residue protein sequence, read N- to C-terminus: Coproporphyrinogen III oxidase, anaerobic 1 (452 aa).

Positions 45–278 (LDPAVPISVY…ANLAARLFTE (234 aa)) constitute a Radical SAM core domain. An S-adenosyl-L-methionine-binding site is contributed by tyrosine 54. [4Fe-4S] cluster contacts are provided by cysteine 60 and cysteine 64. Phenylalanine 66 contacts S-adenosyl-L-methionine. Cysteine 67 provides a ligand contact to [4Fe-4S] cluster. Residues glycine 111, 112–113 (GT), glutamate 144, glutamine 171, arginine 183, and aspartate 208 contribute to the S-adenosyl-L-methionine site.

It belongs to the anaerobic coproporphyrinogen-III oxidase family. In terms of assembly, monomer. The cofactor is [4Fe-4S] cluster.

Its subcellular location is the cytoplasm. It catalyses the reaction coproporphyrinogen III + 2 S-adenosyl-L-methionine = protoporphyrinogen IX + 2 5'-deoxyadenosine + 2 L-methionine + 2 CO2. It functions in the pathway porphyrin-containing compound metabolism; protoporphyrin-IX biosynthesis; protoporphyrinogen-IX from coproporphyrinogen-III (AdoMet route): step 1/1. Anaerobic transformation of coproporphyrinogen III into protoporphyrinogen IX. Dedicated to bacteriochlorophyll biosynthesis. In Cereibacter sphaeroides (strain ATCC 17023 / DSM 158 / JCM 6121 / CCUG 31486 / LMG 2827 / NBRC 12203 / NCIMB 8253 / ATH 2.4.1.) (Rhodobacter sphaeroides), this protein is Coproporphyrinogen III oxidase, anaerobic 1 (hemN).